Here is a 301-residue protein sequence, read N- to C-terminus: ATP synthase subunit gamma, mitochondrial (301 aa).

The protein belongs to the ATPase gamma chain family. As to quaternary structure, F-type ATPases have 2 components, CF(1) - the catalytic core - and CF(0) - the membrane proton channel. CF(1) has five subunits: alpha(3), beta(3), gamma(1), delta(1), epsilon(1). CF(0) has three main subunits: a, b and c.

Its subcellular location is the mitochondrion. It is found in the mitochondrion inner membrane. In terms of biological role, mitochondrial membrane ATP synthase (F(1)F(0) ATP synthase or Complex V) produces ATP from ADP in the presence of a proton gradient across the membrane which is generated by electron transport complexes of the respiratory chain. F-type ATPases consist of two structural domains, F(1) - containing the extramembraneous catalytic core, and F(0) - containing the membrane proton channel, linked together by a central stalk and a peripheral stalk. During catalysis, ATP synthesis in the catalytic domain of F(1) is coupled via a rotary mechanism of the central stalk subunits to proton translocation. Part of the complex F(1) domain and the central stalk which is part of the complex rotary element. The gamma subunit protrudes into the catalytic domain formed of alpha(3)beta(3). Rotation of the central stalk against the surrounding alpha(3)beta(3) subunits leads to hydrolysis of ATP in three separate catalytic sites on the beta subunits. The chain is ATP synthase subunit gamma, mitochondrial (atp3) from Schizosaccharomyces pombe (strain 972 / ATCC 24843) (Fission yeast).